The sequence spans 105 residues: Large ribosomal subunit protein uL24 (105 aa).

It belongs to the universal ribosomal protein uL24 family. As to quaternary structure, part of the 50S ribosomal subunit.

Its function is as follows. One of two assembly initiator proteins, it binds directly to the 5'-end of the 23S rRNA, where it nucleates assembly of the 50S subunit. Functionally, one of the proteins that surrounds the polypeptide exit tunnel on the outside of the subunit. In Wolbachia pipientis wMel, this protein is Large ribosomal subunit protein uL24.